The primary structure comprises 313 residues: Ribosomal protein L11 methyltransferase (313 aa).

4 residues coordinate S-adenosyl-L-methionine: Thr-154, Gly-179, Asp-201, and Asn-242.

The protein belongs to the methyltransferase superfamily. PrmA family.

It is found in the cytoplasm. It catalyses the reaction L-lysyl-[protein] + 3 S-adenosyl-L-methionine = N(6),N(6),N(6)-trimethyl-L-lysyl-[protein] + 3 S-adenosyl-L-homocysteine + 3 H(+). Functionally, methylates ribosomal protein L11. This chain is Ribosomal protein L11 methyltransferase, found in Xanthomonas oryzae pv. oryzae (strain MAFF 311018).